A 1025-amino-acid chain; its full sequence is Retinoblastoma-related protein (1025 aa).

Residues 1–20 (MEDHPPKPSIPTADASLSNH) are disordered. A domain A region spans residues 422–623 (TPVTTAMTTA…EKGSSMYNSL (202 aa)). Residues 422 to 875 (TPVTTAMTTA…NEIFIPAVKP (454 aa)) form a pocket region. The tract at residues 624–744 (TVARPALSAE…PGAGGETCAE (121 aa)) is spacer. The segment at 745–875 (TAINVFFSKI…NEIFIPAVKP (131 aa)) is domain B.

This sequence belongs to the retinoblastoma protein (RB) family.

Its subcellular location is the nucleus. Its function is as follows. Regulator of biological processes that recruits a histone deacetylase to control gene transcription. May play a role in the entry into mitosis, negatively regulating the cell proliferation. Formation of stable complexes with geminiviridae replication-associated proteins may create a cellular environment which favors viral DNA replication. The sequence is that of Retinoblastoma-related protein (pRB) from Camellia sinensis (Tea plant).